The primary structure comprises 38 residues: Photosystem II reaction center protein M (38 aa).

A helical transmembrane segment spans residues 5–25 (ILGLIATALFIVIPTSFLLIL).

This sequence belongs to the PsbM family. As to quaternary structure, PSII is composed of 1 copy each of membrane proteins PsbA, PsbB, PsbC, PsbD, PsbE, PsbF, PsbH, PsbI, PsbJ, PsbK, PsbL, PsbM, PsbT, PsbX, PsbY, PsbZ, Psb30/Ycf12, at least 3 peripheral proteins of the oxygen-evolving complex and a large number of cofactors. It forms dimeric complexes.

The protein localises to the plastid. It localises to the cyanelle thylakoid membrane. In terms of biological role, one of the components of the core complex of photosystem II (PSII). PSII is a light-driven water:plastoquinone oxidoreductase that uses light energy to abstract electrons from H(2)O, generating O(2) and a proton gradient subsequently used for ATP formation. It consists of a core antenna complex that captures photons, and an electron transfer chain that converts photonic excitation into a charge separation. This subunit is found at the monomer-monomer interface. The chain is Photosystem II reaction center protein M from Cyanophora paradoxa.